Here is a 91-residue protein sequence, read N- to C-terminus: Peptide Ctry2146 (91 aa).

The signal sequence occupies residues 1–23 (MKTQTLLVTFLVVLLMVATQTEA). Leu-33 bears the Leucine amide mark. The propeptide occupies 37 to 91 (GLLDGLLGKRGLLFGKRGPLFGKRALTNQDFLDFAYDPSLSAADMDALEMLFEDY).

This sequence belongs to the non-disulfide-bridged peptide (NDBP) superfamily. Short antimicrobial peptide (group 4) family. In terms of tissue distribution, expressed by the venom gland.

The protein localises to the secreted. Its subcellular location is the target cell membrane. Functionally, antimicrobial peptide. The sequence is that of Peptide Ctry2146 from Chaerilus tryznai (Scorpion).